The following is a 242-amino-acid chain: uncharacterized protein (242 aa).

A run of 3 helical transmembrane segments spans residues 75 to 95 (YAIF…HNFY), 116 to 136 (IVLI…FSLI), and 176 to 196 (IQGL…LEVI). Residues 204–242 (DVEMSSMRGQAITTEPASDNTMAEGTDCNTSKDVESGSS) form a disordered region. Polar residues predominate over residues 210–232 (MRGQAITTEPASDNTMAEGTDCN). The segment covering 233-242 (TSKDVESGSS) has biased composition (basic and acidic residues).

Its subcellular location is the cytoplasm. The protein localises to the membrane. This is an uncharacterized protein from Schizosaccharomyces pombe (strain 972 / ATCC 24843) (Fission yeast).